The sequence spans 128 residues: Small ribosomal subunit protein uS9c (128 aa).

Residues 106 to 128 form a disordered region; sequence SRIKERKKYGLKKARKAPQFSKR. The span at 109-128 shows a compositional bias: basic residues; the sequence is KERKKYGLKKARKAPQFSKR.

This sequence belongs to the universal ribosomal protein uS9 family.

It is found in the plastid. It localises to the chloroplast. The chain is Small ribosomal subunit protein uS9c (rps9) from Cyanidium caldarium (Red alga).